Reading from the N-terminus, the 400-residue chain is Enoyl-[acyl-carrier-protein] reductase [NADH] (400 aa).

NAD(+) contacts are provided by residues 48-53, 74-75, 111-112, and 139-140; these read GASSGY, FE, DA, and LA. Tyr-225 serves as a coordination point for substrate. Tyr-235 serves as the catalytic Proton donor. NAD(+) is bound by residues Lys-244 and 273–275; that span reads VVT.

Belongs to the TER reductase family. As to quaternary structure, monomer.

The catalysed reaction is a 2,3-saturated acyl-[ACP] + NAD(+) = a (2E)-enoyl-[ACP] + NADH + H(+). Its pathway is lipid metabolism; fatty acid biosynthesis. Its function is as follows. Involved in the final reduction of the elongation cycle of fatty acid synthesis (FAS II). Catalyzes the reduction of a carbon-carbon double bond in an enoyl moiety that is covalently linked to an acyl carrier protein (ACP). The sequence is that of Enoyl-[acyl-carrier-protein] reductase [NADH] from Marinomonas sp. (strain MWYL1).